Here is a 478-residue protein sequence, read N- to C-terminus: POU domain, class 2, transcription factor 2 (478 aa).

5 disordered regions span residues 1–82, 167–199, 275–298, 357–391, and 409–478; these read MVHS…PPQA, QAVT…EASD, SSLP…GRRR, PCSA…PLSQ, and TLHP…PYQP. Over residues 12–37 the composition is skewed to basic and acidic residues; the sequence is RMSKPLEAEKQGLDSPSEHTDTERNG. Residues 38–60 are compositionally biased toward polar residues; the sequence is PDTNHQNPQNKTSPFSVSPTGPS. A POU-specific domain is found at 195-269; the sequence is EEASDLEELE…LLEKWLNDAE (75 aa). Polar residues predominate over residues 275–285; sequence SSLPSPNQLSR. A DNA-binding region (homeobox) is located at residues 297–356; it reads RRKKRTSIETNVRFALEKSFLANQKPTSEEILLIAEQLHMEKEVIRVWFCNRRQKEKRIN. The tract at residues 389–410 is leucine-zipper; that stretch reads LSQASSSLSTTVTTLSSAVGTL. Positions 416 to 425 are enriched in gly residues; sequence AGGGAAGGGA.

The protein belongs to the POU transcription factor family. Class-2 subfamily. Interacts with NR3C1, AR and PGR. Interacts with POU2AF1; the interaction increases POU2F2 transactivation activity. Predominantly expressed in B-cells.

It is found in the nucleus. Its activity is regulated as follows. Transactivation activity is enhanced by transcriptional coactivator POU2AF1. Its function is as follows. Transcription factor that specifically binds to the octamer motif (5'-ATTTGCAT-3'). Regulates IL6 expression in B cells with POU2AF1. Regulates transcription in a number of tissues in addition to activating immunoglobulin gene expression. Modulates transcription transactivation by NR3C1, AR and PGR. The protein is POU domain, class 2, transcription factor 2 (POU2F2) of Sus scrofa (Pig).